The primary structure comprises 134 residues: Translation initiation factor 2 subunit beta (134 aa).

The protein belongs to the eIF-2-beta/eIF-5 family. Heterotrimer composed of an alpha, a beta and a gamma chain.

Functionally, eIF-2 functions in the early steps of protein synthesis by forming a ternary complex with GTP and initiator tRNA. In Pyrobaculum aerophilum (strain ATCC 51768 / DSM 7523 / JCM 9630 / CIP 104966 / NBRC 100827 / IM2), this protein is Translation initiation factor 2 subunit beta.